We begin with the raw amino-acid sequence, 356 residues long: sn-glycerol-3-phosphate import ATP-binding protein UgpC (356 aa).

The region spanning 4–235 (LKLQAVTKSW…PASLFVASFI (232 aa)) is the ABC transporter domain. 37–44 (GPSGCGKS) is an ATP binding site.

It belongs to the ABC transporter superfamily. sn-glycerol-3-phosphate importer (TC 3.A.1.1.3) family. In terms of assembly, the complex is composed of two ATP-binding proteins (UgpC), two transmembrane proteins (UgpA and UgpE) and a solute-binding protein (UgpB).

Its subcellular location is the cell inner membrane. The catalysed reaction is sn-glycerol 3-phosphate(out) + ATP + H2O = sn-glycerol 3-phosphate(in) + ADP + phosphate + H(+). Part of the ABC transporter complex UgpBAEC involved in sn-glycerol-3-phosphate (G3P) import. Responsible for energy coupling to the transport system. The polypeptide is sn-glycerol-3-phosphate import ATP-binding protein UgpC (Shigella sonnei (strain Ss046)).